The sequence spans 342 residues: Glycerol-3-phosphate dehydrogenase [NAD(P)+] (342 aa).

Residues Trp11, Arg33, and Lys112 each coordinate NADPH. The sn-glycerol 3-phosphate site is built by Lys112, Gly147, and Ser149. Ala151 lines the NADPH pocket. 5 residues coordinate sn-glycerol 3-phosphate: Lys202, Asp255, Ser265, Arg266, and Asn267. Lys202 functions as the Proton acceptor in the catalytic mechanism. Arg266 provides a ligand contact to NADPH. NADPH is bound by residues Val290 and Glu292.

It belongs to the NAD-dependent glycerol-3-phosphate dehydrogenase family.

It is found in the cytoplasm. It catalyses the reaction sn-glycerol 3-phosphate + NAD(+) = dihydroxyacetone phosphate + NADH + H(+). It carries out the reaction sn-glycerol 3-phosphate + NADP(+) = dihydroxyacetone phosphate + NADPH + H(+). It participates in membrane lipid metabolism; glycerophospholipid metabolism. Its function is as follows. Catalyzes the reduction of the glycolytic intermediate dihydroxyacetone phosphate (DHAP) to sn-glycerol 3-phosphate (G3P), the key precursor for phospholipid synthesis. The polypeptide is Glycerol-3-phosphate dehydrogenase [NAD(P)+] (Cupriavidus metallidurans (strain ATCC 43123 / DSM 2839 / NBRC 102507 / CH34) (Ralstonia metallidurans)).